We begin with the raw amino-acid sequence, 315 residues long: Adenine deaminase (315 aa).

Residues histidine 14, histidine 16, and histidine 194 each coordinate Zn(2+). Glutamate 197 (proton donor) is an active-site residue. Residue aspartate 275 participates in Zn(2+) binding. Aspartate 276 serves as a coordination point for substrate.

This sequence belongs to the metallo-dependent hydrolases superfamily. Adenosine and AMP deaminases family. Adenine deaminase type 2 subfamily. Zn(2+) is required as a cofactor.

It carries out the reaction adenine + H2O + H(+) = hypoxanthine + NH4(+). In terms of biological role, catalyzes the hydrolytic deamination of adenine to hypoxanthine. Plays an important role in the purine salvage pathway and in nitrogen catabolism. The sequence is that of Adenine deaminase from Ectopseudomonas mendocina (strain ymp) (Pseudomonas mendocina).